The chain runs to 118 residues: Protein BEX4 (118 aa).

Residues 14–50 (VEKDKKNKKGGKASKQSEEESHHLEEVENKKPGGNVR) are disordered. Residues 28–44 (KQSEEESHHLEEVENKK) show a composition bias toward basic and acidic residues. The tract at residues 30–88 (SEEESHHLEEVENKKPGGNVRRKVRRLVPNFLWAIPNRHVDHSEGGEEVGRFVGQVMEA) is interaction with SIRT2. Residues 30-118 (SEEESHHLEE…DNHYDFCLIP (89 aa)) form an interaction with alpha-tubulin region. Cys-115 is a Zn(2+) binding site.

It belongs to the BEX family. In terms of assembly, interacts with alpha-tubulin. Interacts with SIRT2. Ubiquitinated and degraded by the proteasome.

It localises to the cytoplasm. The protein resides in the cytoskeleton. It is found in the spindle pole. The protein localises to the nucleus. In terms of biological role, may play a role in microtubule deacetylation by negatively regulating the SIRT2 deacetylase activity toward alpha-tubulin and thereby participate in the control of cell cycle progression and genomic stability. In absence of reductive stress, acts as a pseudosubstrate for the CRL2(FEM1B) complex: associates with FEM1B via zinc, thereby preventing association between FEM1B and its substrates. The polypeptide is Protein BEX4 (Rattus norvegicus (Rat)).